The following is a 419-amino-acid chain: CCA-adding enzyme (419 aa).

ATP is bound by residues S54 and R57. S54 and R57 together coordinate CTP. Mg(2+) is bound by residues D66, D68, and D118. ATP is bound by residues H141, K161, and Y170. 3 residues coordinate CTP: H141, K161, and Y170.

This sequence belongs to the tRNA nucleotidyltransferase/poly(A) polymerase family. Archaeal CCA-adding enzyme subfamily. As to quaternary structure, homodimer. Requires Mg(2+) as cofactor.

The enzyme catalyses a tRNA precursor + 2 CTP + ATP = a tRNA with a 3' CCA end + 3 diphosphate. The catalysed reaction is a tRNA with a 3' CCA end + 2 CTP + ATP = a tRNA with a 3' CCACCA end + 3 diphosphate. Functionally, catalyzes the addition and repair of the essential 3'-terminal CCA sequence in tRNAs without using a nucleic acid template. Adds these three nucleotides in the order of C, C, and A to the tRNA nucleotide-73, using CTP and ATP as substrates and producing inorganic pyrophosphate. tRNA 3'-terminal CCA addition is required both for tRNA processing and repair. Also involved in tRNA surveillance by mediating tandem CCA addition to generate a CCACCA at the 3' terminus of unstable tRNAs. While stable tRNAs receive only 3'-terminal CCA, unstable tRNAs are marked with CCACCA and rapidly degraded. This chain is CCA-adding enzyme, found in Pyrobaculum aerophilum (strain ATCC 51768 / DSM 7523 / JCM 9630 / CIP 104966 / NBRC 100827 / IM2).